A 551-amino-acid polypeptide reads, in one-letter code: Eukaryotic translation initiation factor 3 subunit D-2 (551 aa).

Residues Thr-91–Phe-154 form a disordered region. Residues Gln-95–Thr-113 show a composition bias toward basic residues. A compositionally biased stretch (low complexity) spans Ala-121–Thr-136. Residues Gln-290 to Pro-304 are RNA gate. Residues Pro-527 to Asn-551 are disordered. Positions Phe-531–Ser-542 are enriched in acidic residues.

The protein belongs to the eIF-3 subunit D family. Component of the eukaryotic translation initiation factor 3 (eIF-3) complex. The eIF-3 complex interacts with pix.

The protein resides in the cytoplasm. MRNA cap-binding component of the eukaryotic translation initiation factor 3 (eIF-3) complex, which is involved in protein synthesis of a specialized repertoire of mRNAs and, together with other initiation factors, stimulates binding of mRNA and methionyl-tRNAi to the 40S ribosome. The eIF-3 complex specifically targets and initiates translation of a subset of mRNAs involved in cell proliferation. In the eIF-3 complex, eif3d specifically recognizes and binds the 7-methylguanosine cap of a subset of mRNAs. In Drosophila melanogaster (Fruit fly), this protein is Eukaryotic translation initiation factor 3 subunit D-2.